The chain runs to 396 residues: Acetate kinase (396 aa).

Asn-8 is a Mg(2+) binding site. Residue Lys-15 participates in ATP binding. Arg-89 contacts substrate. The Proton donor/acceptor role is filled by Asp-146. ATP contacts are provided by residues 206 to 210 (HIGNG), 283 to 285 (DMR), and 331 to 335 (GIGEN). Glu-383 serves as a coordination point for Mg(2+).

This sequence belongs to the acetokinase family. In terms of assembly, homodimer. Mg(2+) is required as a cofactor. Mn(2+) serves as cofactor.

Its subcellular location is the cytoplasm. It carries out the reaction acetate + ATP = acetyl phosphate + ADP. The protein operates within metabolic intermediate biosynthesis; acetyl-CoA biosynthesis; acetyl-CoA from acetate: step 1/2. In terms of biological role, catalyzes the formation of acetyl phosphate from acetate and ATP. Can also catalyze the reverse reaction. The sequence is that of Acetate kinase from Streptococcus gordonii (strain Challis / ATCC 35105 / BCRC 15272 / CH1 / DL1 / V288).